The chain runs to 830 residues: Prolactin receptor (830 aa).

The first 23 residues, 1–23, serve as a signal peptide directing secretion; the sequence is MKQKLRSSVQIILLFALTAVGLT. The Extracellular segment spans residues 24-439; that stretch reads GQSYPGKPKI…QIPTDFRIKD (416 aa). Fibronectin type-III domains follow at residues 30-128, 129-228, 231-331, and 333-434; these read KPKI…VQPD, APVN…IPNG, PPEK…IVQT, and PPVN…IPTD. Cysteines 36 and 46 form a disulfide. Asn59 is a glycosylation site (N-linked (GlcNAc...) asparagine). Residues Cys75 and Cys86 are joined by a disulfide bond. Asn91, Asn100, Asn112, Asn132, Asn263, Asn304, Asn316, and Asn336 each carry an N-linked (GlcNAc...) asparagine glycan. Positions 415 and 417 each coordinate Zn(2+). The short motif at 420-424 is the WSXWS motif element; it reads WSEWS. The chain crosses the membrane as a helical span at residues 440–460; that stretch reads MVVWIIVGVLSSLICLVMSWT. Residues 461–830 lie on the Cytoplasmic side of the membrane; that stretch reads MVLKGYRMIA…DPSSFIPAFK (370 aa). The short motif at 472–480 is the Box 1 motif element; the sequence is ILPPVPGPK.

It belongs to the type I cytokine receptor family. Type 1 subfamily.

It is found in the membrane. Functionally, this is a receptor for the anterior pituitary hormone prolactin. In Columba livia (Rock dove), this protein is Prolactin receptor (PRLR).